The following is a 235-amino-acid chain: Fibrillarin-like rRNA/tRNA 2'-O-methyltransferase (235 aa).

S-adenosyl-L-methionine contacts are provided by residues 91–92, 110–111, 137–138, and 157–160; these read TT, EF, DA, and DVAQ.

It belongs to the methyltransferase superfamily. Fibrillarin family. Interacts with nop5. Component of box C/D small ribonucleoprotein (sRNP) particles that contain rpl7ae, FlpA and nop5, plus a guide RNA.

Functionally, involved in pre-rRNA and tRNA processing. Utilizes the methyl donor S-adenosyl-L-methionine to catalyze the site-specific 2'-hydroxyl methylation of ribose moieties in rRNA and tRNA. Site specificity is provided by a guide RNA that base pairs with the substrate. Methylation occurs at a characteristic distance from the sequence involved in base pairing with the guide RNA. The polypeptide is Fibrillarin-like rRNA/tRNA 2'-O-methyltransferase (Pyrobaculum islandicum (strain DSM 4184 / JCM 9189 / GEO3)).